Here is a 93-residue protein sequence, read N- to C-terminus: Pyrimidine/purine nucleoside phosphorylase (93 aa).

It belongs to the nucleoside phosphorylase PpnP family.

The enzyme catalyses a purine D-ribonucleoside + phosphate = a purine nucleobase + alpha-D-ribose 1-phosphate. It carries out the reaction adenosine + phosphate = alpha-D-ribose 1-phosphate + adenine. The catalysed reaction is cytidine + phosphate = cytosine + alpha-D-ribose 1-phosphate. It catalyses the reaction guanosine + phosphate = alpha-D-ribose 1-phosphate + guanine. The enzyme catalyses inosine + phosphate = alpha-D-ribose 1-phosphate + hypoxanthine. It carries out the reaction thymidine + phosphate = 2-deoxy-alpha-D-ribose 1-phosphate + thymine. The catalysed reaction is uridine + phosphate = alpha-D-ribose 1-phosphate + uracil. It catalyses the reaction xanthosine + phosphate = alpha-D-ribose 1-phosphate + xanthine. Functionally, catalyzes the phosphorolysis of diverse nucleosides, yielding D-ribose 1-phosphate and the respective free bases. Can use uridine, adenosine, guanosine, cytidine, thymidine, inosine and xanthosine as substrates. Also catalyzes the reverse reactions. The sequence is that of Pyrimidine/purine nucleoside phosphorylase from Hahella chejuensis (strain KCTC 2396).